Consider the following 139-residue polypeptide: Peptide methionine sulfoxide reductase MsrB (139 aa).

The 123-residue stretch at 8 to 130 (DREWQRELSP…NSASLQLKTQ (123 aa)) folds into the MsrB domain. Positions 47, 50, 96, and 99 each coordinate Zn(2+). Cysteine 119 functions as the Nucleophile in the catalytic mechanism.

It belongs to the MsrB Met sulfoxide reductase family. Zn(2+) serves as cofactor.

It catalyses the reaction L-methionyl-[protein] + [thioredoxin]-disulfide + H2O = L-methionyl-(R)-S-oxide-[protein] + [thioredoxin]-dithiol. This is Peptide methionine sulfoxide reductase MsrB from Acinetobacter baumannii (strain SDF).